The primary structure comprises 445 residues: MKFPASVLASVFLFVAETMAALYLSSTYRSAGDRMWQALTLFFSLMPCTLVQLTLLFVHRDLSRDRPLVLLMHLLQLGPLYRCCEVFCIYCQSDQNEEPYVSITKKRQMPKDGLSEEVEKEVGQSEGKLFTHRSAFSRASVIQAFLGSAPQLTLQLYITVLEQNITTGRFIMVLSLLSIVYGALRCNILAIKIKYDEYEVKVKPLAYVCIFLWRSFEIATRVIVLVLFTSVLKIWVVVVILVNFFSFFLYPWILFWNSGSPFPENIEKALTRVGTTIVLGFLTLLYAGINMFCWSAVQLKIDNPELISKSQNWYRLLIYYMMRFVENSVLLLLWFFFKTDIYMYVCAPLLILQLLIGYCTSILFMLVFYQFFHPCKKLFSSSVSESFSACLRCVCWSSARRKSTEPVGRIDTDLKACTDQGAQPSTSKLTPEATEIWTAVDLCST.

The Cytoplasmic portion of the chain corresponds to 1 to 2; it reads MK. The helical transmembrane segment at 3-23 threads the bilayer; that stretch reads FPASVLASVFLFVAETMAALY. Topologically, residues 24–37 are extracellular; sequence LSSTYRSAGDRMWQ. A helical membrane pass occupies residues 38 to 58; the sequence is ALTLFFSLMPCTLVQLTLLFV. Over 59 to 68 the chain is Cytoplasmic; it reads HRDLSRDRPL. Residues 69–89 traverse the membrane as a helical segment; that stretch reads VLLMHLLQLGPLYRCCEVFCI. Residues 90-140 are Extracellular-facing; sequence YCQSDQNEEPYVSITKKRQMPKDGLSEEVEKEVGQSEGKLFTHRSAFSRAS. Serine 115 is modified (phosphoserine). Residues 141 to 161 traverse the membrane as a helical segment; it reads VIQAFLGSAPQLTLQLYITVL. At 162–170 the chain is on the cytoplasmic side; it reads EQNITTGRF. Residues 171 to 191 form a helical membrane-spanning segment; that stretch reads IMVLSLLSIVYGALRCNILAI. The Extracellular portion of the chain corresponds to 192–207; sequence KIKYDEYEVKVKPLAY. Residues 208–228 traverse the membrane as a helical segment; it reads VCIFLWRSFEIATRVIVLVLF. Over 229-234 the chain is Cytoplasmic; the sequence is TSVLKI. A helical membrane pass occupies residues 235-255; the sequence is WVVVVILVNFFSFFLYPWILF. The Extracellular segment spans residues 256-276; it reads WNSGSPFPENIEKALTRVGTT. Residues 277 to 297 traverse the membrane as a helical segment; that stretch reads IVLGFLTLLYAGINMFCWSAV. The Cytoplasmic portion of the chain corresponds to 298-316; the sequence is QLKIDNPELISKSQNWYRL. A helical membrane pass occupies residues 317-337; sequence LIYYMMRFVENSVLLLLWFFF. Topologically, residues 338 to 348 are extracellular; that stretch reads KTDIYMYVCAP. The helical transmembrane segment at 349-369 threads the bilayer; that stretch reads LLILQLLIGYCTSILFMLVFY. At 370–445 the chain is on the cytoplasmic side; that stretch reads QFFHPCKKLF…IWTAVDLCST (76 aa).

It belongs to the XK family. Heterodimer with Kell; disulfide-linked. Interacts with VPS13A.

Its subcellular location is the endoplasmic reticulum membrane. Recruits the lipid transfer protein VPS13A from lipid droplets to the endoplasmic reticulum (ER) membrane. The chain is Endoplasmic reticulum membrane adapter protein XK from Rattus norvegicus (Rat).